The chain runs to 224 residues: Flagellar L-ring protein (224 aa).

The N-terminal stretch at 1-15 is a signal peptide; the sequence is MKWYLVALSGLLLSG. Cys-16 is lipidated: N-palmitoyl cysteine. Cys-16 is lipidated: S-diacylglycerol cysteine.

The protein belongs to the FlgH family. As to quaternary structure, the basal body constitutes a major portion of the flagellar organelle and consists of four rings (L,P,S, and M) mounted on a central rod.

Its subcellular location is the cell outer membrane. The protein localises to the bacterial flagellum basal body. In terms of biological role, assembles around the rod to form the L-ring and probably protects the motor/basal body from shearing forces during rotation. The sequence is that of Flagellar L-ring protein from Trichlorobacter lovleyi (strain ATCC BAA-1151 / DSM 17278 / SZ) (Geobacter lovleyi).